Reading from the N-terminus, the 396-residue chain is Arginine biosynthesis bifunctional protein ArgJ (396 aa).

Substrate-binding residues include Thr147, Lys173, Thr184, Glu270, Asn391, and Ser396. Catalysis depends on Thr184, which acts as the Nucleophile.

Belongs to the ArgJ family. Heterotetramer of two alpha and two beta chains.

It localises to the cytoplasm. The catalysed reaction is N(2)-acetyl-L-ornithine + L-glutamate = N-acetyl-L-glutamate + L-ornithine. It carries out the reaction L-glutamate + acetyl-CoA = N-acetyl-L-glutamate + CoA + H(+). The protein operates within amino-acid biosynthesis; L-arginine biosynthesis; L-ornithine and N-acetyl-L-glutamate from L-glutamate and N(2)-acetyl-L-ornithine (cyclic): step 1/1. It functions in the pathway amino-acid biosynthesis; L-arginine biosynthesis; N(2)-acetyl-L-ornithine from L-glutamate: step 1/4. Functionally, catalyzes two activities which are involved in the cyclic version of arginine biosynthesis: the synthesis of N-acetylglutamate from glutamate and acetyl-CoA as the acetyl donor, and of ornithine by transacetylation between N(2)-acetylornithine and glutamate. The protein is Arginine biosynthesis bifunctional protein ArgJ of Lactococcus lactis subsp. lactis (strain IL1403) (Streptococcus lactis).